Here is a 572-residue protein sequence, read N- to C-terminus: Sulfite reductase [NADPH] hemoprotein beta-component (572 aa).

Positions 437, 443, 482, and 486 each coordinate [4Fe-4S] cluster. C486 contacts siroheme.

It belongs to the nitrite and sulfite reductase 4Fe-4S domain family. Alpha(8)-beta(8). The alpha component is a flavoprotein, the beta component is a hemoprotein. Siroheme is required as a cofactor. [4Fe-4S] cluster serves as cofactor.

It carries out the reaction hydrogen sulfide + 3 NADP(+) + 3 H2O = sulfite + 3 NADPH + 4 H(+). It functions in the pathway sulfur metabolism; hydrogen sulfide biosynthesis; hydrogen sulfide from sulfite (NADPH route): step 1/1. Functionally, component of the sulfite reductase complex that catalyzes the 6-electron reduction of sulfite to sulfide. This is one of several activities required for the biosynthesis of L-cysteine from sulfate. The chain is Sulfite reductase [NADPH] hemoprotein beta-component from Staphylococcus epidermidis (strain ATCC 35984 / DSM 28319 / BCRC 17069 / CCUG 31568 / BM 3577 / RP62A).